The following is a 70-amino-acid chain: Deleted in esophageal cancer 1 (70 aa).

As to expression, expressed in many tissues, with highest expression in prostate and testis. Reduced expression in esophageal carcinomas.

Functionally, candidate tumor suppressor. The protein is Deleted in esophageal cancer 1 of Homo sapiens (Human).